Consider the following 376-residue polypeptide: 3-dehydroquinate synthase (376 aa).

NAD(+)-binding positions include 115–119 (GVIGD), 139–140 (TS), lysine 152, and lysine 161. Zn(2+) is bound by residues glutamate 194, histidine 256, and histidine 275.

It belongs to the sugar phosphate cyclases superfamily. Dehydroquinate synthase family. The cofactor is Co(2+). Requires Zn(2+) as cofactor. NAD(+) serves as cofactor.

The protein resides in the cytoplasm. It carries out the reaction 7-phospho-2-dehydro-3-deoxy-D-arabino-heptonate = 3-dehydroquinate + phosphate. The protein operates within metabolic intermediate biosynthesis; chorismate biosynthesis; chorismate from D-erythrose 4-phosphate and phosphoenolpyruvate: step 2/7. In terms of biological role, catalyzes the conversion of 3-deoxy-D-arabino-heptulosonate 7-phosphate (DAHP) to dehydroquinate (DHQ). This Rhizobium leguminosarum bv. trifolii (strain WSM2304) protein is 3-dehydroquinate synthase.